The sequence spans 542 residues: ATP synthase subunit alpha (542 aa).

An ATP-binding site is contributed by 173 to 180 (GDRQTGKT). Residues 518-542 (PLVEKKPDEKHTTPVEQEKIVAGEK) are disordered. Over residues 519–542 (LVEKKPDEKHTTPVEQEKIVAGEK) the composition is skewed to basic and acidic residues.

Belongs to the ATPase alpha/beta chains family. As to quaternary structure, F-type ATPases have 2 components, CF(1) - the catalytic core - and CF(0) - the membrane proton channel. CF(1) has five subunits: alpha(3), beta(3), gamma(1), delta(1), epsilon(1). CF(0) has three main subunits: a(1), b(2) and c(9-12). The alpha and beta chains form an alternating ring which encloses part of the gamma chain. CF(1) is attached to CF(0) by a central stalk formed by the gamma and epsilon chains, while a peripheral stalk is formed by the delta and b chains.

It localises to the cell membrane. The catalysed reaction is ATP + H2O + 4 H(+)(in) = ADP + phosphate + 5 H(+)(out). In terms of biological role, produces ATP from ADP in the presence of a proton gradient across the membrane. The alpha chain is a regulatory subunit. In Bifidobacterium adolescentis (strain ATCC 15703 / DSM 20083 / NCTC 11814 / E194a), this protein is ATP synthase subunit alpha.